We begin with the raw amino-acid sequence, 226 residues long: Chalcone--flavanone isomerase 1 (226 aa).

Residues Thr-52, Asn-117, and Thr-194 each contribute to the substrate site.

The protein belongs to the chalcone isomerase family.

It catalyses the reaction a chalcone = a flavanone.. It participates in secondary metabolite biosynthesis; flavonoid biosynthesis. Catalyzes the intramolecular cyclization of bicyclic chalcones into tricyclic (S)-flavanones. Responsible for the isomerization of 4,2',4',6'-tetrahydroxychalcone (also termed chalcone) into naringenin. The chain is Chalcone--flavanone isomerase 1 (CHI1) from Lotus japonicus (Lotus corniculatus var. japonicus).